The chain runs to 902 residues: Desmocollin-2 (902 aa).

Positions 1-27 (MAAVGSMRSGSPAFGLGHLLTLAILAL) are cleaved as a signal peptide. A propeptide spanning residues 28-135 (ASDACKEVVL…TEKVLSRAKR (108 aa)) is cleaved from the precursor. 5 consecutive Cadherin domains span residues 136-243 (RWAP…YPIF), 244-355 (TQKL…LPTF), 356-471 (TRTT…GPEC), 472-579 (IPPM…FIPK), and 580-694 (QTVV…RLGP). At 136-694 (RWAPIPCSML…TGYADVRLGP (559 aa)) the chain is on the extracellular side. Residue Asn166 is glycosylated (N-linked (GlcNAc...) asparagine). N-linked (GlcNAc...) asparagine glycans are attached at residues Asn392, Asn546, and Asn629. Residues 695–715 (WAILAILLGIALLFCILFTLV) form a helical membrane-spanning segment. Residues 716–902 (CSVSRASKQQ…RTLAEVCAKR (187 aa)) lie on the Cytoplasmic side of the membrane. 3 positions are modified to phosphoserine: Ser865, Ser869, and Ser874.

As to quaternary structure, interacts with DSP, PKP2 and JUP. Interacts with DSG3; the interaction may limit the interaction of DSC3 with p38MAPK family members and therefore repress p38MAPK signaling activation. In terms of tissue distribution, expressed in intestinal epithelial cells (at protein level). Expressed in the heart. Expressed in tongue, bladder, stomach, liver, kidney, and lung.

The protein resides in the cell membrane. It localises to the cell junction. Its subcellular location is the desmosome. A component of desmosome cell-cell junctions which are required for positive regulation of cellular adhesion. Promotes timely incorporation of DSG2 into desmosome intercellular junctions and promotes interaction of desmosome cell junctions with intermediate filament cytokeratin, via modulation of DSP phosphorylation. Plays an important role in desmosome-mediated maintenance of intestinal epithelial cell intercellular adhesion strength and barrier function. Positively regulates wound healing of intestinal mucosa via promotion of epithelial cell migration, and also plays a role in mechanotransduction of force between intestinal epithelial cells and extracellular matrix. May contribute to epidermal cell positioning (stratification) by mediating differential adhesiveness between cells that express different isoforms. May promote p38MAPK signaling activation that facilitates keratinocyte migration. The protein is Desmocollin-2 (Dsc2) of Mus musculus (Mouse).